A 460-amino-acid polypeptide reads, in one-letter code: Argininosuccinate lyase (460 aa).

The protein belongs to the lyase 1 family. Argininosuccinate lyase subfamily.

The protein localises to the cytoplasm. It catalyses the reaction 2-(N(omega)-L-arginino)succinate = fumarate + L-arginine. It functions in the pathway amino-acid biosynthesis; L-arginine biosynthesis; L-arginine from L-ornithine and carbamoyl phosphate: step 3/3. This Alteromonas mediterranea (strain DSM 17117 / CIP 110805 / LMG 28347 / Deep ecotype) protein is Argininosuccinate lyase.